Here is a 346-residue protein sequence, read N- to C-terminus: Alkanal monooxygenase alpha chain (346 aa).

As to quaternary structure, heterodimer of an alpha and a beta chain.

The catalysed reaction is a long-chain fatty aldehyde + FMNH2 + O2 = a long-chain fatty acid + hnu + FMN + H2O + 2 H(+). Its function is as follows. Light-emitting reaction in luminous bacteria. The chain is Alkanal monooxygenase alpha chain (luxA) from Photobacterium phosphoreum.